The following is a 355-amino-acid chain: N-acetyl-gamma-glutamyl-phosphate reductase (355 aa).

Cys-152 is an active-site residue.

This sequence belongs to the NAGSA dehydrogenase family. Type 1 subfamily.

The protein localises to the cytoplasm. It catalyses the reaction N-acetyl-L-glutamate 5-semialdehyde + phosphate + NADP(+) = N-acetyl-L-glutamyl 5-phosphate + NADPH + H(+). Its pathway is amino-acid biosynthesis; L-arginine biosynthesis; N(2)-acetyl-L-ornithine from L-glutamate: step 3/4. In terms of biological role, catalyzes the NADPH-dependent reduction of N-acetyl-5-glutamyl phosphate to yield N-acetyl-L-glutamate 5-semialdehyde. The chain is N-acetyl-gamma-glutamyl-phosphate reductase from Psychrobacter sp. (strain PRwf-1).